Here is a 1024-residue protein sequence, read N- to C-terminus: Protein translocase subunit SecA (1024 aa).

ATP-binding positions include glutamine 143, 161-165 (GEGKT), and aspartate 661. Positions 970 to 1024 (HKAAESVYTASSDEPETNQEESPQQPAIAEKKPGRNDLCPCGSGKKYKNCHGQQP) are disordered. Zn(2+)-binding residues include cysteine 1008, cysteine 1010, cysteine 1019, and histidine 1020.

The protein belongs to the SecA family. As to quaternary structure, monomer and homodimer. Part of the essential Sec protein translocation apparatus which comprises SecA, SecYEG and auxiliary proteins SecDF. Other proteins may also be involved. It depends on Zn(2+) as a cofactor.

It localises to the cell inner membrane. The protein localises to the cytoplasm. The catalysed reaction is ATP + H2O + cellular proteinSide 1 = ADP + phosphate + cellular proteinSide 2.. Functionally, part of the Sec protein translocase complex. Interacts with the SecYEG preprotein conducting channel. Has a central role in coupling the hydrolysis of ATP to the transfer of proteins into and across the cell membrane, serving as an ATP-driven molecular motor driving the stepwise translocation of polypeptide chains across the membrane. The polypeptide is Protein translocase subunit SecA (Pelodictyon phaeoclathratiforme (strain DSM 5477 / BU-1)).